The sequence spans 177 residues: Protein TERMINAL FLOWER 1 (177 aa).

This sequence belongs to the phosphatidylethanolamine-binding protein family. As to expression, expressed below the apical dome of inflorescence and coflorescence meristems, and in inflorescence stem.

The protein resides in the cytoplasm. Its function is as follows. Controls inflorescence meristem identity and is required for maintenance of an indeterminate inflorescence. Prevents the expression of 'APETALA1' and 'LEAFY'. Also plays a role in the regulation of the time of flowering in the long-day flowering pathway. May form complexes with phosphorylated ligands by interfering with kinases and their effectors. The polypeptide is Protein TERMINAL FLOWER 1 (TFL1) (Arabidopsis thaliana (Mouse-ear cress)).